A 640-amino-acid chain; its full sequence is Putative solute carrier organic anion transporter family member 1B7 (640 aa).

The Extracellular segment spans residues 1–16; sequence MKISTTQIERRFEISS. The chain crosses the membrane as a helical span at residues 17-37; that stretch reads SLVGLIDGSFEIGNLFVIVFV. Over 38-49 the chain is Cytoplasmic; sequence SYFGSKLHRPKL. A helical transmembrane segment spans residues 50 to 70; sequence IGIGCFLMGTGSILMALPHFF. Residues 71–123 are Extracellular-facing; the sequence is MGYYRYSKETNIDPSENSTSNLPNCLINQMLSLNRTPSEIIERGCVKESGSHM. Residues 124–144 form a helical membrane-spanning segment; it reads WIYVFMGNMLRGIGETPIVPL. The Cytoplasmic portion of the chain corresponds to 145–159; that stretch reads GISYIDDFAKEGHSS. A helical membrane pass occupies residues 160–180; it reads LYLGTVNVMGMTGLVFAFMLG. At 181–211 the chain is on the extracellular side; that stretch reads SLFAKMYVDIGYVDLSTIRITPKDSRWVGAW. Residues 212-232 traverse the membrane as a helical segment; that stretch reads WLGFLVSGIVSIISSIPFFFL. Over 233-292 the chain is Cytoplasmic; the sequence is PLNPNKPQKERKVSLFLHVLKTNDKRNQIANLTNRRKYITKNVTGFFQSLKSILTNPLYV. The residue at position 246 (S246) is a Phosphoserine. The helical transmembrane segment at 293-313 threads the bilayer; sequence IFVIFTLLHMSSYIASLTYII. The Extracellular segment spans residues 314–329; it reads KMVEQQYGWSASKTNF. A helical transmembrane segment spans residues 330-350; it reads LLGVLALPAVAIGMFSGGYII. The Cytoplasmic portion of the chain corresponds to 351-362; it reads KKFKLSLVGLAK. The chain crosses the membrane as a helical span at residues 363-383; sequence LAFCSATVHLLSQVLYFFLIC. Residues 384–492 are Extracellular-facing; sequence ESKSVAGLTL…CTRKSYVYFV (109 aa). The 56-residue stretch at 406 to 461 folds into the Kazal-like domain; the sequence is DVPLSYCNSECNCDESQWEPVCGNNGITYLSPCLAGCKSSSGNKEPIVFYNCSCVE. 3 disulfides stabilise this stretch: C412–C442, C418–C438, and C427–C459. A helical transmembrane segment spans residues 493–513; it reads IQVLDAFLCAVGLTSYSVLVI. Over 514 to 521 the chain is Cytoplasmic; the sequence is RIVQPELK. The helical transmembrane segment at 522–542 threads the bilayer; it reads ALAIGFHSMIMRSLGGILVPI. Topologically, residues 543–577 are extracellular; that stretch reads YFGALIDTTCMKWSTNSCGARGACRIYNSTYLGRA. The chain crosses the membrane as a helical span at residues 578-598; sequence FFGLKVALIFPVLVLLTVFIF. Topologically, residues 599–640 are cytoplasmic; sequence VVRKKSHGKDTKVLENERQVMDEANLEFLNDSEHFVPSAEEQ. S636 is subject to Phosphoserine.

It belongs to the organo anion transporter (TC 2.A.60) family.

Its subcellular location is the cell membrane. In Homo sapiens (Human), this protein is Putative solute carrier organic anion transporter family member 1B7 (SLCO1B7).